The sequence spans 325 residues: Alkanal monooxygenase beta chain (325 aa).

This sequence belongs to the bacterial luciferase oxidoreductase family. As to quaternary structure, heterodimer of an alpha and a beta chain.

It catalyses the reaction a long-chain fatty aldehyde + FMNH2 + O2 = a long-chain fatty acid + hnu + FMN + H2O + 2 H(+). Functionally, light-emitting reaction in luminous bacteria. The specific role of the beta subunit is unknown, but it is absolutely required for bioluminescence activity. The sequence is that of Alkanal monooxygenase beta chain (luxB) from Photobacterium leiognathi.